The following is a 380-amino-acid chain: Chaperone protein DnaJ (380 aa).

The J domain occupies 4 to 68; the sequence is DFYSVLGVSR…EKRRMYDQMG (65 aa). The segment covering 27–87 has biased composition (basic and acidic residues); sequence KASEYHPDVS…RGATDTDRGR (61 aa). The interval 27 to 126 is disordered; that stretch reads KASEYHPDVS…SRSGPRQGSD (100 aa). Gly residues predominate over residues 88–100; the sequence is GGMGGMGGGGMGG. A compositionally biased stretch (low complexity) spans 115 to 124; that stretch reads SQSRSGPRQG. A CR-type zinc finger spans residues 141–223; sequence GVTKQLTVTR…CRGDGQVRNE (83 aa). 8 residues coordinate Zn(2+): cysteine 154, cysteine 157, cysteine 171, cysteine 174, cysteine 197, cysteine 200, cysteine 211, and cysteine 214. CXXCXGXG motif repeat units follow at residues 154–161, 171–178, 197–204, and 211–218; these read CPDCDGAG, CSACDGRG, CPQCDGKG, and CSTCRGDG.

The protein belongs to the DnaJ family. In terms of assembly, homodimer. The cofactor is Zn(2+).

The protein resides in the cytoplasm. In terms of biological role, participates actively in the response to hyperosmotic and heat shock by preventing the aggregation of stress-denatured proteins and by disaggregating proteins, also in an autonomous, DnaK-independent fashion. Unfolded proteins bind initially to DnaJ; upon interaction with the DnaJ-bound protein, DnaK hydrolyzes its bound ATP, resulting in the formation of a stable complex. GrpE releases ADP from DnaK; ATP binding to DnaK triggers the release of the substrate protein, thus completing the reaction cycle. Several rounds of ATP-dependent interactions between DnaJ, DnaK and GrpE are required for fully efficient folding. Also involved, together with DnaK and GrpE, in the DNA replication of plasmids through activation of initiation proteins. This chain is Chaperone protein DnaJ, found in Natronomonas pharaonis (strain ATCC 35678 / DSM 2160 / CIP 103997 / JCM 8858 / NBRC 14720 / NCIMB 2260 / Gabara) (Halobacterium pharaonis).